The following is a 446-amino-acid chain: Deoxyguanosinetriphosphate triphosphohydrolase-like protein (446 aa).

Positions 1-28 (MSSSVWQERRHGEDKQRRNDHRSPFQRD) are disordered. Positions 7 to 28 (QERRHGEDKQRRNDHRSPFQRD) are enriched in basic and acidic residues. An HD domain is found at 59–252 (RLTHSLEVSQ…MELADDIAYA (194 aa)).

Belongs to the dGTPase family. Type 2 subfamily.

This Shewanella sp. (strain MR-7) protein is Deoxyguanosinetriphosphate triphosphohydrolase-like protein.